The primary structure comprises 498 residues: UDP-N-acetylmuramate--L-alanine ligase (498 aa).

Position 133 to 139 (glycine 133 to threonine 139) interacts with ATP.

Belongs to the MurCDEF family.

It is found in the cytoplasm. It carries out the reaction UDP-N-acetyl-alpha-D-muramate + L-alanine + ATP = UDP-N-acetyl-alpha-D-muramoyl-L-alanine + ADP + phosphate + H(+). Its pathway is cell wall biogenesis; peptidoglycan biosynthesis. In terms of biological role, cell wall formation. In Wolbachia pipientis wMel, this protein is UDP-N-acetylmuramate--L-alanine ligase.